The following is a 176-amino-acid chain: Large ribosomal subunit protein uL6 (176 aa).

The segment covering 156–170 (YKGKGVRYADEQVRR) has biased composition (basic and acidic residues). Positions 156–176 (YKGKGVRYADEQVRRKEAKKK) are disordered.

Belongs to the universal ribosomal protein uL6 family. Part of the 50S ribosomal subunit.

In terms of biological role, this protein binds to the 23S rRNA, and is important in its secondary structure. It is located near the subunit interface in the base of the L7/L12 stalk, and near the tRNA binding site of the peptidyltransferase center. This Shewanella woodyi (strain ATCC 51908 / MS32) protein is Large ribosomal subunit protein uL6.